The chain runs to 92 residues: Conotoxin Cal22f (92 aa).

An N-terminal signal peptide occupies residues 1–24 (MMSTKGITLFLCLLLLALATSVNG). Residues 25–44 (GQGTRRSRMTRALHGGRPSA) constitute a propeptide that is removed on maturation.

Post-translationally, contains 4 disulfide bonds. In terms of tissue distribution, expressed by the venom duct.

It localises to the secreted. In terms of biological role, probable neurotoxin with unknown target. Possibly targets ion channels. This chain is Conotoxin Cal22f, found in Californiconus californicus (California cone).